The following is a 192-amino-acid chain: MLKKTFAALALGTALLSAGQAMAAEYKIDKEGQHAFVDWKISHLGYSFIHGTFKDFDGNFSWDSAKPEASKISVDLKTASLWSNHAERDKHIASADFLDVKKYPDAKFVSTSVKSTGDKTADVTGDLTMHGVTKPVTFKATFNGEGKDPWGGERAGFNATTTLNLNDFGIKGPGATSQTLDLDISVEGVKQK.

Positions Met-1–Ala-23 are cleaved as a signal peptide.

It belongs to the UPF0312 family. Type 1 subfamily.

The protein localises to the periplasm. This Pseudomonas putida (strain ATCC 700007 / DSM 6899 / JCM 31910 / BCRC 17059 / LMG 24140 / F1) protein is UPF0312 protein Pput_4854.